The sequence spans 136 residues: Autophagy-related protein 41 (136 aa).

An ATG9-binding region spans residues 127-136; sequence QNYRLWLSSV.

Interacts with ATG9.

The protein resides in the preautophagosomal structure membrane. In terms of biological role, involved in both selective and non-selective autophagy. Does not appear to play a role in determining the size of autophagosomes, but rather influences their formation rate. With ATG9, plays a role in the delivery of donor membrane to expanding phagophore. In Saccharomyces cerevisiae (strain ATCC 204508 / S288c) (Baker's yeast), this protein is Autophagy-related protein 41.